We begin with the raw amino-acid sequence, 73 residues long: uncharacterized protein (73 aa).

The protein belongs to the asfivirus DP63R family.

This is an uncharacterized protein from Ornithodoros (relapsing fever ticks).